The following is a 30-amino-acid chain: Serum amyloid P-component (30 aa).

The region spanning 1–30 (APQDLSGKMFIFPQETSTANVXLTARSQDF) is the Pentraxin (PTX) domain.

It belongs to the pentraxin family. In terms of assembly, homopentamer. Discoid arrangement of 5 covalently bound subunits. Ca(2+) is required as a cofactor.

The protein localises to the secreted. This chain is Serum amyloid P-component, found in Anarhichas lupus (Atlantic wolffish).